Reading from the N-terminus, the 371-residue chain is Protein SOMBRERO (371 aa).

An NAC domain is found at 17–166 (VPPGFRFHPT…GWVVCRVFKK (150 aa)). The DNA-binding element occupies 118-172 (IGLRKTLVFYTGRAPHGQKTEWIMHEYRLDDSENEIQEDGWVVCRVFKKKNHFRG). Disordered stretches follow at residues 176 to 213 (EQEQDHHHHHQYISTNNDHDHHHHIDSNSNNHSPLILH) and 316 to 355 (VQNHQAKCFGDLSNNDNNDQADHLGNNNGGSSSSPVNQRF). Over residues 192 to 201 (NDHDHHHHID) the composition is skewed to basic and acidic residues. 2 stretches are compositionally biased toward low complexity: residues 202–213 (SNSNNHSPLILH) and 340–349 (GNNNGGSSSS).

As to expression, accumulates in maturing root cap cells, in both COL and LRC cells.

Its subcellular location is the nucleus. Transcription regulator. Together with BRN1 and BRN2, regulates cellular maturation of root cap. Represses stem cell-like divisions in the root cap daughter cells, and thus promotes daughter cell fate. Inhibits expression of its positive regulator FEZ in a feedback loop for controlled switches in cell division plane. Promotes the expression of genes involved in secondary cell walls (SCW) biosynthesis. The polypeptide is Protein SOMBRERO (SMB) (Arabidopsis thaliana (Mouse-ear cress)).